Consider the following 128-residue polypeptide: Large ribosomal subunit protein uL18 (128 aa).

The disordered stretch occupies residues 1 to 36 (MAKRSSLTRRGVSPRAAARARRHMRVRKKVRGTPER). Over residues 18–31 (ARARRHMRVRKKVR) the composition is skewed to basic residues.

It belongs to the universal ribosomal protein uL18 family. In terms of assembly, part of the 50S ribosomal subunit; part of the 5S rRNA/L5/L18/L25 subcomplex. Contacts the 5S and 23S rRNAs.

Functionally, this is one of the proteins that bind and probably mediate the attachment of the 5S RNA into the large ribosomal subunit, where it forms part of the central protuberance. The polypeptide is Large ribosomal subunit protein uL18 (Thermobifida fusca (strain YX)).